We begin with the raw amino-acid sequence, 333 residues long: 4-hydroxy-2-oxovalerate aldolase (333 aa).

The Pyruvate carboxyltransferase domain maps to 4-254 (VKIFDLTLRD…DCGIDLYKTM (251 aa)). Position 12–13 (12–13 (RD)) interacts with substrate. Mn(2+) is bound at residue Asp13. His16 serves as the catalytic Proton acceptor. His193 provides a ligand contact to substrate. Mn(2+) contacts are provided by His193 and His195. Position 284 (Tyr284) interacts with substrate.

Belongs to the 4-hydroxy-2-oxovalerate aldolase family.

The enzyme catalyses (S)-4-hydroxy-2-oxopentanoate = acetaldehyde + pyruvate. This is 4-hydroxy-2-oxovalerate aldolase from Desulfitobacterium hafniense (strain DSM 10664 / DCB-2).